The sequence spans 513 residues: Microtubule-associated protein 70-5 (513 aa).

Disordered regions lie at residues 1-20 (MTAAENPFVSDTSSLQSQLK), 60-81 (KLGATENQVDQKELERKKLEEE), 347-367 (FLTSGGGSKKRSSSQLRGSVT), and 393-413 (ANGLTDQHEEDSERKTEEDGN). Residues 9 to 18 (VSDTSSLQSQ) show a composition bias toward polar residues. Residues 10-322 (SDTSSLQSQL…LKLRLKTIED (313 aa)) adopt a coiled-coil conformation. Positions 60-80 (KLGATENQVDQKELERKKLEE) are enriched in basic and acidic residues. The required for targeting to microtubules stretch occupies residues 190–400 (FLEKINRQKV…ITANGLTDQH (211 aa)). Residues 426 to 501 (DRLQKEVIAL…EESKLCRKAK (76 aa)) are a coiled coil.

It belongs to the MAP70 family. Interacts with MAP70.1 and itself.

The protein resides in the cytoplasm. It is found in the cytoskeleton. Its function is as follows. Plant-specific protein that interact with microtubules and regulates microtubule dynamics. May play a role in anisotropic cell expansion and organ growth. In association with MAP70.1, is essential for the normal banding pattern of secondary cell wall and for the proper development of xylem tracheary elements and wood formation. This chain is Microtubule-associated protein 70-5 (MAP70.5), found in Arabidopsis thaliana (Mouse-ear cress).